The chain runs to 302 residues: Recombination-associated protein RdgC (302 aa).

It belongs to the RdgC family.

It is found in the cytoplasm. Its subcellular location is the nucleoid. In terms of biological role, may be involved in recombination. This chain is Recombination-associated protein RdgC, found in Mannheimia succiniciproducens (strain KCTC 0769BP / MBEL55E).